The sequence spans 181 residues: uncharacterized protein (181 aa).

Belongs to the M.jannaschii MJ0150/MJ0739/MJ0745/MJ1460/MJ1642 family.

This is an uncharacterized protein from Methanocaldococcus jannaschii (strain ATCC 43067 / DSM 2661 / JAL-1 / JCM 10045 / NBRC 100440) (Methanococcus jannaschii).